We begin with the raw amino-acid sequence, 205 residues long: UPF0548 protein At2g17695 (205 aa).

The protein belongs to the UPF0548 family.

The protein is UPF0548 protein At2g17695 of Arabidopsis thaliana (Mouse-ear cress).